A 230-amino-acid chain; its full sequence is Heptaprenylglyceryl phosphate synthase (230 aa).

Lys-12 provides a ligand contact to sn-glycerol 1-phosphate. 2 residues coordinate Mg(2+): Asp-14 and Thr-40. Residues 159 to 164, Gly-189, and 209 to 210 each bind sn-glycerol 1-phosphate; these read YIEYSG and GD.

This sequence belongs to the GGGP/HepGP synthase family. Group I subfamily. As to quaternary structure, homodimer. It depends on Mg(2+) as a cofactor.

It carries out the reaction sn-glycerol 1-phosphate + all-trans-heptaprenyl diphosphate = 3-heptaprenyl-sn-glycero-1-phosphate + diphosphate. It functions in the pathway membrane lipid metabolism; glycerophospholipid metabolism. In terms of biological role, prenyltransferase that catalyzes in vivo the transfer of the heptaprenyl moiety of heptaprenyl pyrophosphate (HepPP; 35 carbon atoms) to the C3 hydroxyl of sn-glycerol-1-phosphate (G1P), producing heptaprenylglyceryl phosphate (HepGP). This reaction is an ether-bond-formation step in the biosynthesis of archaea-type G1P-based membrane lipids found in Bacillales. The polypeptide is Heptaprenylglyceryl phosphate synthase (Staphylococcus aureus (strain Mu3 / ATCC 700698)).